The following is a 553-amino-acid chain: RNA exonuclease 1 (553 aa).

Position 24 is a phosphoserine (S24). Positions 167 to 194 (MEKINKLKELQKKKKITINDLVLSEQQL) form a coiled coil. Residues 225 to 373 (IFALDCEMCL…EDARACLELT (149 aa)) enclose the Exonuclease domain. Positions 509 to 533 (WNNLSTELEFIQDKKERLDKRRERE) form a coiled coil.

It belongs to the REXO1/REXO3 family.

The protein resides in the nucleus. In terms of biological role, 3' exoribonuclease required for 5S rRNA maturation and for the proper maturation of the 5' cistron of the tRNA-Arg3 dicistronic gene. Involved with REX2 in the maturation of the 5.8S rRNA, and with REX2 and REX3, in the 3' processing of the U5L snRNA. This chain is RNA exonuclease 1 (RNH70), found in Saccharomyces cerevisiae (strain ATCC 204508 / S288c) (Baker's yeast).